A 157-amino-acid polypeptide reads, in one-letter code: Small ribosomal subunit protein uS7 (157 aa).

This sequence belongs to the universal ribosomal protein uS7 family. Part of the 30S ribosomal subunit. Contacts proteins S9 and S11.

Its function is as follows. One of the primary rRNA binding proteins, it binds directly to 16S rRNA where it nucleates assembly of the head domain of the 30S subunit. Is located at the subunit interface close to the decoding center, probably blocks exit of the E-site tRNA. The polypeptide is Small ribosomal subunit protein uS7 (Francisella tularensis subsp. tularensis (strain FSC 198)).